A 450-amino-acid polypeptide reads, in one-letter code: Phosphoglucosamine mutase (450 aa).

Ser-102 (phosphoserine intermediate) is an active-site residue. 4 residues coordinate Mg(2+): Ser-102, Asp-243, Asp-245, and Asp-247. Ser-102 carries the post-translational modification Phosphoserine.

This sequence belongs to the phosphohexose mutase family. It depends on Mg(2+) as a cofactor. Activated by phosphorylation.

It catalyses the reaction alpha-D-glucosamine 1-phosphate = D-glucosamine 6-phosphate. In terms of biological role, catalyzes the conversion of glucosamine-6-phosphate to glucosamine-1-phosphate. The sequence is that of Phosphoglucosamine mutase from Rhizobium rhizogenes (strain K84 / ATCC BAA-868) (Agrobacterium radiobacter).